The chain runs to 455 residues: Vimentin (455 aa).

Residues 1–87 (MASRTNTSSY…GLADAINTEF (87 aa)) form a head region. Positions 87 to 122 (FKTNRTNEKAEMQHLNDRFASYIDKVRFLEQQNKIL) form a coiled coil. Residues 88–122 (KTNRTNEKAEMQHLNDRFASYIDKVRFLEQQNKIL) form a coil 1A region. One can recognise an IF rod domain in the interval 94-402 (EKAEMQHLND…KLLEGEESRI (309 aa)). The interval 123 to 144 (IAELEQMRGKGSSRVGDLYQDE) is linker 1. The stretch at 145–236 (MRELRRQVDQ…KLHDEELAEL (92 aa)) forms a coiled coil. Residues 145–236 (MRELRRQVDQ…KLHDEELAEL (92 aa)) form a coil 1B region. The interval 237–259 (QIQIQEQHVQIDMEVAKPDLTAA) is linker 12. The coil 2 stretch occupies residues 260–398 (LKDVRQQYET…ATYRKLLEGE (139 aa)). Residues 294–398 (ARNNEAIRLA…ATYRKLLEGE (105 aa)) are a coiled coil. Positions 399–455 (ESRITTPFPNLSSLTLRETMKETRPAMDSLSKKVVIKTIETRDGHIINESSQNDDLE) are tail.

It belongs to the intermediate filament family. Homomer assembled from elementary dimers. In terms of processing, one of the most prominent phosphoproteins in various cells of mesenchymal origin. Phosphorylation is enhanced during cell division, at which time vimentin filaments are significantly reorganized.

It localises to the cytoplasm. The protein resides in the cytoskeleton. It is found in the nucleus matrix. Vimentins are class-III intermediate filaments found in various non-epithelial cells, especially mesenchymal cells. Vimentin is attached to the nucleus, endoplasmic reticulum, and mitochondria, either laterally or terminally. This Cyprinus carpio (Common carp) protein is Vimentin (vim).